The chain runs to 987 residues: Mediator of RNA polymerase II transcription subunit 24 (987 aa).

6 consecutive short sequence motifs (LXXLL motif) follow at residues 128 to 132 (LHWLL), 344 to 348 (LTPLL), 446 to 450 (LDLLL), 555 to 559 (LVALL), 786 to 790 (LPGLL), and 855 to 859 (LMRLL). 2 positions are modified to phosphoserine: Ser-860 and Ser-871.

It belongs to the Mediator complex subunit 24 family. As to quaternary structure, component of the Mediator complex, which is composed of MED1, MED4, MED6, MED7, MED8, MED9, MED10, MED11, MED12, MED13, MED13L, MED14, MED15, MED16, MED17, MED18, MED19, MED20, MED21, MED22, MED23, MED24, MED25, MED26, MED27, MED29, MED30, MED31, CCNC, CDK8 and CDC2L6/CDK11. The MED12, MED13, CCNC and CDK8 subunits form a distinct module termed the CDK8 module. Mediator containing the CDK8 module is less active than Mediator lacking this module in supporting transcriptional activation. Individual preparations of the Mediator complex lacking one or more distinct subunits have been variously termed ARC, CRSP, DRIP, PC2, SMCC and TRAP. Interacts with AR. Interacts with MED1 and MED10. Expressed in the adrenal gland, brain, epididymis, heart, kidney, liver, ovary, pancreas, prostate, skeletal muscle, small intestine, spleen, stomach, testis and thymus.

The protein localises to the nucleus. Functionally, component of the Mediator complex, a coactivator involved in the regulated transcription of nearly all RNA polymerase II-dependent genes. Mediator functions as a bridge to convey information from gene-specific regulatory proteins to the basal RNA polymerase II transcription machinery. Mediator is recruited to promoters by direct interactions with regulatory proteins and serves as a scaffold for the assembly of a functional preinitiation complex with RNA polymerase II and the general transcription factors. Required for basal and activator-dependent transcription. This is Mediator of RNA polymerase II transcription subunit 24 (Med24) from Mus musculus (Mouse).